Here is a 159-residue protein sequence, read N- to C-terminus: ATP-dependent Clp protease adapter protein CLPS1, chloroplastic (159 aa).

The N-terminal 44 residues, 1 to 44, are a transit peptide targeting the chloroplast; that stretch reads METAICGRLALAPSSLFNSKSGDKHLVSKGPCVNRSILMTLSTS.

This sequence belongs to the ClpS family. As to quaternary structure, interacts with CLPC1 (via N-terminus) and CLPC2, but not with CLPt1 or CLPT2. Binds to ClpF; this interaction stimulates their association with ClpC. In terms of tissue distribution, expressed exclusively in photosynthetic green tissues with high levels in young, developing leaf tissues.

It localises to the plastid. The protein localises to the chloroplast stroma. In terms of biological role, small adapter protein that modulate the activity of CLPC. Involved in plastid biogenesis in particular when chloroplast protein synthesis capacity is a limiting factor. Probably involved in substrate selection for plastid Clp protease system. Recruitment to ClpC chaperones is facilitated by CLPF thus forming a binary adapter for selective substrate recognition and delivery to plastid Clp protease system (CLPC). The chain is ATP-dependent Clp protease adapter protein CLPS1, chloroplastic from Arabidopsis thaliana (Mouse-ear cress).